A 62-amino-acid polypeptide reads, in one-letter code: Bowman-Birk type proteinase inhibitor (62 aa).

7 disulfides stabilise this stretch: cysteine 8-cysteine 61, cysteine 9-cysteine 24, cysteine 12-cysteine 57, cysteine 14-cysteine 22, cysteine 31-cysteine 38, cysteine 35-cysteine 50, and cysteine 40-cysteine 48.

As to quaternary structure, forms a monomer at protein concentrations of below 1 mM. At concentrations of above 2 mM, self-associates.

Its function is as follows. Inhibits trypsin but not chymotrypsin. Inhibits the trypsin-like proteinase activity present in larvae of the crop pests Adoxophyes orana, Hyphantria cunea, Lobesia botrana and Ostrinia nubilalis. This Medicago scutellata (Snail medic) protein is Bowman-Birk type proteinase inhibitor.